A 150-amino-acid chain; its full sequence is Cytochrome c-type biogenesis protein CcmE (150 aa).

At 1–9 (MRNLKKTRR) the chain is on the cytoplasmic side. A helical; Signal-anchor for type II membrane protein membrane pass occupies residues 10-30 (IQILLVAGGALVLSTALIGYG). Over 31–150 (MRDGINFFRA…VYRDPAQPEG (120 aa)) the chain is Periplasmic. 2 residues coordinate heme: His123 and Tyr127.

The protein belongs to the CcmE/CycJ family.

The protein localises to the cell inner membrane. Heme chaperone required for the biogenesis of c-type cytochromes. Transiently binds heme delivered by CcmC and transfers the heme to apo-cytochromes in a process facilitated by CcmF and CcmH. This chain is Cytochrome c-type biogenesis protein CcmE, found in Rhodobacter capsulatus (strain ATCC BAA-309 / NBRC 16581 / SB1003).